The primary structure comprises 223 residues: Cytidine deaminase 3 (223 aa).

CMP/dCMP-type deaminase domains are found at residues 21–154 (TEPM…FSPD) and 184–223 (SDCSHLKCKALAAANNSFSPYTNSPSGVALQDDDGNWYRG). 62 to 64 (NVE) lines the substrate pocket. Histidine 75 lines the Zn(2+) pocket. The Proton donor role is filled by glutamate 77. Cysteine 110 and cysteine 113 together coordinate Zn(2+).

The protein belongs to the cytidine and deoxycytidylate deaminase family. As to quaternary structure, homodimer. It depends on Zn(2+) as a cofactor.

The catalysed reaction is cytidine + H2O + H(+) = uridine + NH4(+). The enzyme catalyses 2'-deoxycytidine + H2O + H(+) = 2'-deoxyuridine + NH4(+). This enzyme scavenges exogenous and endogenous cytidine and 2'-deoxycytidine for UMP synthesis. This Arabidopsis thaliana (Mouse-ear cress) protein is Cytidine deaminase 3 (CDA3).